A 410-amino-acid polypeptide reads, in one-letter code: Dual-specificity RNA methyltransferase RlmN (410 aa).

Catalysis depends on glutamate 123, which acts as the Proton acceptor. Residues 129-378 (EEGRGTLCIS…IRTPRGRDIL (250 aa)) form the Radical SAM core domain. A disulfide bridge connects residues cysteine 136 and cysteine 381. Residues cysteine 143, cysteine 147, and cysteine 150 each contribute to the [4Fe-4S] cluster site. S-adenosyl-L-methionine-binding positions include 207 to 208 (GE), serine 239, 261 to 263 (SLH), and asparagine 338. Catalysis depends on cysteine 381, which acts as the S-methylcysteine intermediate.

It belongs to the radical SAM superfamily. RlmN family. Requires [4Fe-4S] cluster as cofactor.

The protein localises to the cytoplasm. It catalyses the reaction adenosine(2503) in 23S rRNA + 2 reduced [2Fe-2S]-[ferredoxin] + 2 S-adenosyl-L-methionine = 2-methyladenosine(2503) in 23S rRNA + 5'-deoxyadenosine + L-methionine + 2 oxidized [2Fe-2S]-[ferredoxin] + S-adenosyl-L-homocysteine. It carries out the reaction adenosine(37) in tRNA + 2 reduced [2Fe-2S]-[ferredoxin] + 2 S-adenosyl-L-methionine = 2-methyladenosine(37) in tRNA + 5'-deoxyadenosine + L-methionine + 2 oxidized [2Fe-2S]-[ferredoxin] + S-adenosyl-L-homocysteine. In terms of biological role, specifically methylates position 2 of adenine 2503 in 23S rRNA and position 2 of adenine 37 in tRNAs. m2A2503 modification seems to play a crucial role in the proofreading step occurring at the peptidyl transferase center and thus would serve to optimize ribosomal fidelity. The sequence is that of Dual-specificity RNA methyltransferase RlmN from Mesorhizobium japonicum (strain LMG 29417 / CECT 9101 / MAFF 303099) (Mesorhizobium loti (strain MAFF 303099)).